Consider the following 255-residue polypeptide: Geranylgeranylglyceryl phosphate synthase (255 aa).

The Mg(2+) site is built by aspartate 34 and threonine 64. Sn-glycerol 1-phosphate contacts are provided by residues 182-188 (YLEAGSG), 213-214 (GG), and 235-236 (GN).

The protein belongs to the GGGP/HepGP synthase family. Group II subfamily. The cofactor is Mg(2+).

It is found in the cytoplasm. It catalyses the reaction sn-glycerol 1-phosphate + (2E,6E,10E)-geranylgeranyl diphosphate = sn-3-O-(geranylgeranyl)glycerol 1-phosphate + diphosphate. The protein operates within membrane lipid metabolism; glycerophospholipid metabolism. In terms of biological role, prenyltransferase that catalyzes the transfer of the geranylgeranyl moiety of geranylgeranyl diphosphate (GGPP) to the C3 hydroxyl of sn-glycerol-1-phosphate (G1P). This reaction is the first ether-bond-formation step in the biosynthesis of archaeal membrane lipids. This is Geranylgeranylglyceryl phosphate synthase from Saccharolobus islandicus (strain M.16.27) (Sulfolobus islandicus).